We begin with the raw amino-acid sequence, 429 residues long: Phosphomethylpyrimidine synthase (429 aa).

Substrate-binding positions include Asn-66, Met-94, Tyr-123, His-162, 184–186, 225–228, and Glu-264; these read SRG and DALR. Position 268 (His-268) interacts with Zn(2+). Tyr-291 serves as a coordination point for substrate. His-332 contributes to the Zn(2+) binding site. [4Fe-4S] cluster is bound by residues Cys-408, Cys-411, and Cys-415.

It belongs to the ThiC family. The cofactor is [4Fe-4S] cluster.

It catalyses the reaction 5-amino-1-(5-phospho-beta-D-ribosyl)imidazole + S-adenosyl-L-methionine = 4-amino-2-methyl-5-(phosphooxymethyl)pyrimidine + CO + 5'-deoxyadenosine + formate + L-methionine + 3 H(+). The protein operates within cofactor biosynthesis; thiamine diphosphate biosynthesis. Catalyzes the synthesis of the hydroxymethylpyrimidine phosphate (HMP-P) moiety of thiamine from aminoimidazole ribotide (AIR) in a radical S-adenosyl-L-methionine (SAM)-dependent reaction. This is Phosphomethylpyrimidine synthase from Sulfurisphaera tokodaii (strain DSM 16993 / JCM 10545 / NBRC 100140 / 7) (Sulfolobus tokodaii).